Here is a 429-residue protein sequence, read N- to C-terminus: Esterase/beta-lactamase LipL (429 aa).

S88 serves as the catalytic Acyl-ester intermediate.

The protein belongs to the beta-lactamase family.

It is found in the secreted. The protein localises to the cell wall. Its subcellular location is the cell membrane. It catalyses the reaction a fatty acid ester + H2O = an aliphatic alcohol + a fatty acid + H(+). It carries out the reaction an acetyl ester + H2O = an aliphatic alcohol + acetate + H(+). The enzyme catalyses a butanoate ester + H2O = an aliphatic alcohol + butanoate + H(+). The catalysed reaction is an octanoate ester + H2O = an aliphatic alcohol + octanoate + H(+). It catalyses the reaction decanoate ester + H2O = decanoate + an aliphatic alcohol + H(+). It carries out the reaction a dodecanoate ester + H2O = an aliphatic alcohol + dodecanoate + H(+). The enzyme catalyses a tetradecanoate ester + H2O = an aliphatic alcohol + tetradecanoate + H(+). The catalysed reaction is hexadecanoate ester + H2O = an aliphatic alcohol + hexadecanoate + H(+). It catalyses the reaction octadecanoate ester + H2O = an aliphatic alcohol + octadecanoate + H(+). It carries out the reaction a hexanoate ester + H2O = an aliphatic alcohol + hexanoate + H(+). The enzyme catalyses a beta-lactam + H2O = a substituted beta-amino acid. Its activity is regulated as follows. Esterase and beta-lactamase activities are inhibited by the active site residue modifiers phenylmethanesulfonylflouride (PMSF) and diethylpyrocarbonate (DEPC). Shows both esterase and beta-lactamase activities, with a much higher activity against phenyl esters than against beta-lactams. Shows esterase activity against both long-chain and short-chain p-nitrophenol (pNP) esters, with a preference for shorter chain esters. Hydrolyzes substrates containing beta-lactam ring such as nitrocefin and ampicillin. Functions as an immunogen that activates both humoral and cell-mediated responses. The sequence is that of Esterase/beta-lactamase LipL from Mycobacterium tuberculosis (strain ATCC 25618 / H37Rv).